We begin with the raw amino-acid sequence, 300 residues long: Transmembrane protein 158 (300 aa).

The signal sequence occupies residues 1–20 (MLPLLAALLAAACPLPPVRG). N-linked (GlcNAc...) asparagine glycosylation is present at N75. 2 helical membrane passes run 231-251 (LVIV…IAGF) and 273-293 (VPAG…AAAV).

Belongs to the TMEM158 family. Post-translationally, N-glycosylated.

It is found in the membrane. Receptor for brain injury-derived neurotrophic peptide (BINP), a synthetic 13-mer peptide. This chain is Transmembrane protein 158 (TMEM158), found in Homo sapiens (Human).